Reading from the N-terminus, the 739-residue chain is DNA ligase (739 aa).

NAD(+)-binding positions include 34–38 (DADYD), 83–84 (SL), and Glu-117. Lys-119 (N6-AMP-lysine intermediate) is an active-site residue. NAD(+)-binding residues include Arg-140, Glu-175, Lys-291, and Lys-315. Zn(2+) is bound by residues Cys-420, Cys-423, Cys-438, and Cys-444. The BRCT domain maps to 660–739 (ADDSPVAGKT…DGWLDLIGQA (80 aa)).

It belongs to the NAD-dependent DNA ligase family. LigA subfamily. It depends on Mg(2+) as a cofactor. Mn(2+) is required as a cofactor.

The enzyme catalyses NAD(+) + (deoxyribonucleotide)n-3'-hydroxyl + 5'-phospho-(deoxyribonucleotide)m = (deoxyribonucleotide)n+m + AMP + beta-nicotinamide D-nucleotide.. Functionally, DNA ligase that catalyzes the formation of phosphodiester linkages between 5'-phosphoryl and 3'-hydroxyl groups in double-stranded DNA using NAD as a coenzyme and as the energy source for the reaction. It is essential for DNA replication and repair of damaged DNA. The sequence is that of DNA ligase from Ruegeria sp. (strain TM1040) (Silicibacter sp.).